The chain runs to 306 residues: Glutaminase (306 aa).

Residues Ser61, Asn111, Glu157, Asn164, Tyr188, Tyr240, and Val258 each coordinate substrate.

It belongs to the glutaminase family. Homotetramer.

The catalysed reaction is L-glutamine + H2O = L-glutamate + NH4(+). The sequence is that of Glutaminase from Psychrobacter cryohalolentis (strain ATCC BAA-1226 / DSM 17306 / VKM B-2378 / K5).